The following is a 264-amino-acid chain: Glutamate racemase (264 aa).

Residues 10–11 (DS) and 42–43 (YG) contribute to the substrate site. The active-site Proton donor/acceptor is Cys73. 74 to 75 (NT) contributes to the substrate binding site. Cys183 serves as the catalytic Proton donor/acceptor. 184–185 (TH) serves as a coordination point for substrate.

Belongs to the aspartate/glutamate racemases family.

It catalyses the reaction L-glutamate = D-glutamate. The protein operates within cell wall biogenesis; peptidoglycan biosynthesis. Its function is as follows. Provides the (R)-glutamate required for cell wall biosynthesis. The protein is Glutamate racemase of Streptococcus gordonii (strain Challis / ATCC 35105 / BCRC 15272 / CH1 / DL1 / V288).